We begin with the raw amino-acid sequence, 163 residues long: MPSFDIVSEVDLQEARNAVDNASREVESRFDFRGVEATFELNDANKTIKVLSESDFQVNQLLDILRAKLLKRGIEGTSLDVPEDIVHSGKTWFVEAKLKQGIESAVQKKIVKLIKDSKLKVQAQIQGEEIRVTGKSRDDLQSVMALVRGGDLGQPFQFKNFRD.

It belongs to the YajQ family.

Its function is as follows. Nucleotide-binding protein. The protein is Nucleotide-binding protein KPK_4305 of Klebsiella pneumoniae (strain 342).